The primary structure comprises 581 residues: Proline--tRNA ligase (581 aa).

The protein belongs to the class-II aminoacyl-tRNA synthetase family. ProS type 1 subfamily. Homodimer.

It is found in the cytoplasm. It carries out the reaction tRNA(Pro) + L-proline + ATP = L-prolyl-tRNA(Pro) + AMP + diphosphate. In terms of biological role, catalyzes the attachment of proline to tRNA(Pro) in a two-step reaction: proline is first activated by ATP to form Pro-AMP and then transferred to the acceptor end of tRNA(Pro). As ProRS can inadvertently accommodate and process non-cognate amino acids such as alanine and cysteine, to avoid such errors it has two additional distinct editing activities against alanine. One activity is designated as 'pretransfer' editing and involves the tRNA(Pro)-independent hydrolysis of activated Ala-AMP. The other activity is designated 'posttransfer' editing and involves deacylation of mischarged Ala-tRNA(Pro). The misacylated Cys-tRNA(Pro) is not edited by ProRS. The chain is Proline--tRNA ligase from Paracidovorax citrulli (strain AAC00-1) (Acidovorax citrulli).